Reading from the N-terminus, the 140-residue chain is Iron sulfur cluster assembly protein 1 (140 aa).

It belongs to the NifU family. Component of the core Fe-S cluster (ISC) assembly machinery. [2Fe-2S] cluster is required as a cofactor.

Its subcellular location is the mitosome matrix. It functions in the pathway cofactor biosynthesis; iron-sulfur cluster biosynthesis. Scaffold protein for the de novo synthesis of iron-sulfur (Fe-S) clusters within mitosomes, which is required for maturation of both [2Fe-2S] and [4Fe-4S] proteins. First, a [2Fe-2S] cluster is transiently assembled on the scaffold protein ISU1. In a second step, the cluster is released from ISU1, transferred to a glutaredoxin, followed by the formation of [2Fe-2S] proteins, the synthesis of [4Fe-4S] clusters and their target-specific insertion into the recipient apoproteins. Cluster assembly on ISU1 depends on the function of the cysteine desulfurase complex NFS1-ISD11, which serves as the sulfur donor for cluster synthesis, the iron-binding protein frataxin as the putative iron donor, and the electron transfer chain comprised of ferredoxin reductase and ferredoxin, which receive their electrons from NADH. This Encephalitozoon cuniculi (strain GB-M1) (Microsporidian parasite) protein is Iron sulfur cluster assembly protein 1 (ISU1).